Reading from the N-terminus, the 308-residue chain is tRNA dimethylallyltransferase (308 aa).

Residue Gly-14–Thr-21 participates in ATP binding. Thr-16–Thr-21 lines the substrate pocket. Interaction with substrate tRNA regions lie at residues Asp-39 to Leu-42, Gln-163 to Arg-167, and Arg-244 to Arg-249.

Belongs to the IPP transferase family. In terms of assembly, monomer. It depends on Mg(2+) as a cofactor.

The catalysed reaction is adenosine(37) in tRNA + dimethylallyl diphosphate = N(6)-dimethylallyladenosine(37) in tRNA + diphosphate. Its function is as follows. Catalyzes the transfer of a dimethylallyl group onto the adenine at position 37 in tRNAs that read codons beginning with uridine, leading to the formation of N6-(dimethylallyl)adenosine (i(6)A). In Shewanella baltica (strain OS223), this protein is tRNA dimethylallyltransferase.